Here is a 428-residue protein sequence, read N- to C-terminus: Cell division protein DamX (428 aa).

Residues 1–99 (MDEFKPEDEL…KRKKAASKPA (99 aa)) are disordered. The Cytoplasmic segment spans residues 1-103 (MDEFKPEDEL…AASKPASRQY (103 aa)). Composition is skewed to basic and acidic residues over residues 7–36 (EDEL…ERGE) and 50–64 (DDRR…RNEE). A coiled-coil region spans residues 55 to 87 (TRAQKERNEEPEIEEEIDESEDETVDEERVERR). Positions 65 to 82 (PEIEEEIDESEDETVDEE) are enriched in acidic residues. Basic residues predominate over residues 86 to 95 (RRPRKRKKAA). A helical membrane pass occupies residues 104–124 (MMMGVGILVLLLLIIGIGSAL). Topologically, residues 125–428 (KAPSTTSSDQ…PLRQVQADLK (304 aa)) are periplasmic. 2 disordered regions span residues 149–190 (TDQA…VATD) and 226–344 (EPAT…KSAP). A compositionally biased stretch (polar residues) spans 236 to 257 (GNASRDTAKTQTAERPSTTRPA). Over residues 288-334 (PAAPVASTKAPAATSTPAPKETATTAPVQTASPAQTTATPAAGAKTA) the composition is skewed to low complexity. Residues 342 to 419 (SAPSSHYTLQ…VQAKNPWAKP (78 aa)) form the SPOR domain.

It belongs to the DamX family. Interacts in vitro with multiple Fts proteins, including FtsQ and FtsN.

The protein localises to the cell inner membrane. In terms of biological role, non-essential cell division protein. The protein is Cell division protein DamX of Escherichia coli (strain K12).